A 44-amino-acid polypeptide reads, in one-letter code: Keratin-associated protein 20-3 (44 aa).

This sequence belongs to the KRTAP type 20 family. In terms of assembly, interacts with hair keratins.

In the hair cortex, hair keratin intermediate filaments are embedded in an interfilamentous matrix, consisting of hair keratin-associated proteins (KRTAP), which are essential for the formation of a rigid and resistant hair shaft through their extensive disulfide bond cross-linking with abundant cysteine residues of hair keratins. The matrix proteins include the high-sulfur and high-glycine-tyrosine keratins. In Homo sapiens (Human), this protein is Keratin-associated protein 20-3 (KRTAP20-3).